The sequence spans 93 residues: Large ribosomal subunit protein eL42 (93 aa).

The Zn(2+) site is built by Cys11, Cys14, Cys71, and Cys74. Residues Cys11 to Cys74 form a C4-type zinc finger.

It belongs to the eukaryotic ribosomal protein eL42 family. In terms of assembly, part of the 50S ribosomal subunit. Zn(2+) serves as cofactor.

Its function is as follows. Binds to the 23S rRNA. This is Large ribosomal subunit protein eL42 from Thermoplasma acidophilum (strain ATCC 25905 / DSM 1728 / JCM 9062 / NBRC 15155 / AMRC-C165).